Reading from the N-terminus, the 952-residue chain is G patch domain-containing protein 1 homolog (952 aa).

Disordered stretches follow at residues 104–127, 165–233, 320–345, 370–432, 660–711, and 822–952; these read QGIR…QRRR, GWKP…DDYE, DKKP…EDNS, RSRF…KDHS, PEKV…RNKP, and VAPE…KSKH. Basic and acidic residues predominate over residues 107-123; the sequence is RTRDEFANEDEQKQRSD. Positions 153-199 constitute a G-patch domain; the sequence is RDKVAVRILKSMGWKPGQGVGPRQTRKEKRQATARNSKEQYLMEHYG. Residues 214-233 show a composition bias toward acidic residues; the sequence is DSNNEDEDDEDITFAPDDYE. Positions 323-333 are enriched in basic residues; the sequence is PKQKKQQHVQQ. Basic and acidic residues-rich tracts occupy residues 375-402, 414-432, and 679-691; these read PMDK…DLNP, QEEK…KDHS, and IQDK…EPSK. The segment covering 886–896 has biased composition (low complexity); it reads ASSSNESSSSD. Composition is skewed to basic residues over residues 906 to 934 and 941 to 952; these read KLSK…KKSK and HKAKKKKKKSKH.

This sequence belongs to the GPATCH1 family.

The chain is G patch domain-containing protein 1 homolog from Drosophila melanogaster (Fruit fly).